A 460-amino-acid chain; its full sequence is 3-isopropylmalate dehydratase large subunit (460 aa).

Residues C341, C401, and C404 each contribute to the [4Fe-4S] cluster site.

It belongs to the aconitase/IPM isomerase family. LeuC type 1 subfamily. In terms of assembly, heterodimer of LeuC and LeuD. Requires [4Fe-4S] cluster as cofactor.

It catalyses the reaction (2R,3S)-3-isopropylmalate = (2S)-2-isopropylmalate. It participates in amino-acid biosynthesis; L-leucine biosynthesis; L-leucine from 3-methyl-2-oxobutanoate: step 2/4. Its function is as follows. Catalyzes the isomerization between 2-isopropylmalate and 3-isopropylmalate, via the formation of 2-isopropylmaleate. This Phocaeicola vulgatus (strain ATCC 8482 / DSM 1447 / JCM 5826 / CCUG 4940 / NBRC 14291 / NCTC 11154) (Bacteroides vulgatus) protein is 3-isopropylmalate dehydratase large subunit.